The primary structure comprises 351 residues: DNA polymerase IV (351 aa).

The region spanning 4 to 185 (IIHVDMDCFF…LPLEKIPGVG (182 aa)) is the UmuC domain. 2 residues coordinate Mg(2+): Asp8 and Asp103. Residue Glu104 is part of the active site.

Belongs to the DNA polymerase type-Y family. As to quaternary structure, monomer. Mg(2+) serves as cofactor.

Its subcellular location is the cytoplasm. It carries out the reaction DNA(n) + a 2'-deoxyribonucleoside 5'-triphosphate = DNA(n+1) + diphosphate. Functionally, poorly processive, error-prone DNA polymerase involved in untargeted mutagenesis. Copies undamaged DNA at stalled replication forks, which arise in vivo from mismatched or misaligned primer ends. These misaligned primers can be extended by PolIV. Exhibits no 3'-5' exonuclease (proofreading) activity. May be involved in translesional synthesis, in conjunction with the beta clamp from PolIII. This Shigella flexneri protein is DNA polymerase IV.